A 284-amino-acid chain; its full sequence is Bifunctional protein FolD (284 aa).

166–168 (GAS) provides a ligand contact to NADP(+).

This sequence belongs to the tetrahydrofolate dehydrogenase/cyclohydrolase family. As to quaternary structure, homodimer.

The catalysed reaction is (6R)-5,10-methylene-5,6,7,8-tetrahydrofolate + NADP(+) = (6R)-5,10-methenyltetrahydrofolate + NADPH. The enzyme catalyses (6R)-5,10-methenyltetrahydrofolate + H2O = (6R)-10-formyltetrahydrofolate + H(+). It participates in one-carbon metabolism; tetrahydrofolate interconversion. Catalyzes the oxidation of 5,10-methylenetetrahydrofolate to 5,10-methenyltetrahydrofolate and then the hydrolysis of 5,10-methenyltetrahydrofolate to 10-formyltetrahydrofolate. This Legionella pneumophila subsp. pneumophila (strain Philadelphia 1 / ATCC 33152 / DSM 7513) protein is Bifunctional protein FolD.